Consider the following 73-residue polypeptide: Small ribosomal subunit protein bS18 (73 aa).

The protein belongs to the bacterial ribosomal protein bS18 family. In terms of assembly, part of the 30S ribosomal subunit. Forms a tight heterodimer with protein bS6.

Functionally, binds as a heterodimer with protein bS6 to the central domain of the 16S rRNA, where it helps stabilize the platform of the 30S subunit. In Prochlorococcus marinus (strain MIT 9313), this protein is Small ribosomal subunit protein bS18.